Reading from the N-terminus, the 261-residue chain is MLIQLICQAPQRAQELEQIAARWQLQASDDSPFALVLSEERLELRKLDEPKLGAIYVDWVEGAVAHRRKFGGGKGQSIAKAAGLNKGVTPVVLDATAGLGRDAFVLASLGCRVQMVERHPVVAALLEDGLQRAKQDDEIGAWVSERISLLHASSHDALQQLASDPNFTSPDVVYLDPMYPHPENKKKTALVKKEMRVFQSLVGADNDADALLEPALQLAQKRVVVKRPDYAPWLGNRKPSMAMETKKNRFDVYVIAAMSGE.

S-adenosyl-L-methionine contacts are provided by residues 101-102 (RD), 117-118 (ER), 153-154 (SS), and D176.

Belongs to the methyltransferase superfamily. RsmJ family.

It is found in the cytoplasm. The catalysed reaction is guanosine(1516) in 16S rRNA + S-adenosyl-L-methionine = N(2)-methylguanosine(1516) in 16S rRNA + S-adenosyl-L-homocysteine + H(+). Its function is as follows. Specifically methylates the guanosine in position 1516 of 16S rRNA. In Vibrio cholerae serotype O1 (strain ATCC 39315 / El Tor Inaba N16961), this protein is Ribosomal RNA small subunit methyltransferase J.